The primary structure comprises 309 residues: Lipoyl synthase (309 aa).

[4Fe-4S] cluster contacts are provided by Cys-56, Cys-61, Cys-67, Cys-82, Cys-86, Cys-89, and Ser-296. The Radical SAM core domain maps to Phe-68–Ser-285.

The protein belongs to the radical SAM superfamily. Lipoyl synthase family. [4Fe-4S] cluster serves as cofactor.

The protein localises to the cytoplasm. The enzyme catalyses [[Fe-S] cluster scaffold protein carrying a second [4Fe-4S](2+) cluster] + N(6)-octanoyl-L-lysyl-[protein] + 2 oxidized [2Fe-2S]-[ferredoxin] + 2 S-adenosyl-L-methionine + 4 H(+) = [[Fe-S] cluster scaffold protein] + N(6)-[(R)-dihydrolipoyl]-L-lysyl-[protein] + 4 Fe(3+) + 2 hydrogen sulfide + 2 5'-deoxyadenosine + 2 L-methionine + 2 reduced [2Fe-2S]-[ferredoxin]. It participates in protein modification; protein lipoylation via endogenous pathway; protein N(6)-(lipoyl)lysine from octanoyl-[acyl-carrier-protein]: step 2/2. Catalyzes the radical-mediated insertion of two sulfur atoms into the C-6 and C-8 positions of the octanoyl moiety bound to the lipoyl domains of lipoate-dependent enzymes, thereby converting the octanoylated domains into lipoylated derivatives. The polypeptide is Lipoyl synthase (Syntrophotalea carbinolica (strain DSM 2380 / NBRC 103641 / GraBd1) (Pelobacter carbinolicus)).